Reading from the N-terminus, the 464-residue chain is Asparagine--tRNA ligase (464 aa).

It belongs to the class-II aminoacyl-tRNA synthetase family. In terms of assembly, homodimer.

The protein localises to the cytoplasm. It carries out the reaction tRNA(Asn) + L-asparagine + ATP = L-asparaginyl-tRNA(Asn) + AMP + diphosphate + H(+). In Xanthomonas campestris pv. campestris (strain 8004), this protein is Asparagine--tRNA ligase.